Consider the following 239-residue polypeptide: MGASQDDYSLVHKNILHSEDLLKYILETSAYPREHEQLKGLREVTEKHEWSSALVPADEGLFLSMLLKLMNAKRTIEIGVYTGYSLLTTALALPEDGKITAIDVNKSFFEIGLPFIQKAGVEHKINFIESEALPVLDQMLQEMKEEDLYDYAFVDADKSNYANYHERLVKLVRIGGAILYDNTLWYGSVAYPEYPGLYPEDEVDRLSFRNLNTFLAADPRVEISQVSIGDGVTICRRLY.

S-adenosyl-L-methionine is bound by residues V55, E77, 79 to 80 (GV), S85, D103, and A132. A divalent metal cation is bound at residue D155. D157 contributes to the S-adenosyl-L-methionine binding site. D181 and N182 together coordinate a divalent metal cation.

Belongs to the class I-like SAM-binding methyltransferase superfamily. Cation-dependent O-methyltransferase family. Mg(2+) is required as a cofactor. Mostly expressed in bulbs, and, to a lower extent, in stems and roots.

It catalyses the reaction norbelladine + S-adenosyl-L-methionine = 4'-O-methylnorbelladine + S-adenosyl-L-homocysteine + H(+). Its pathway is alkaloid biosynthesis. 4'-O-methyltransferase converting norbelladine to 4'-O-methylnorbelladine. 4'-O-methylnorbelladine is a precursor to all Amaryllidaceae alkaloids such as galanthamine, lycorine and haemanthamine, and including haemanthamine- and crinamine-type alkaloids, promising anticancer agents. The sequence is that of Norbelladine 4'-O-methyltransferase from Narcissus pseudonarcissus (Daffodil).